The following is a 361-amino-acid chain: Mannose-1-phosphate guanyltransferase (361 aa).

Phosphothreonine is present on Thr153. Lys244 participates in a covalent cross-link: Glycyl lysine isopeptide (Lys-Gly) (interchain with G-Cter in ubiquitin).

The protein belongs to the transferase hexapeptide repeat family.

It is found in the cytoplasm. It catalyses the reaction alpha-D-mannose 1-phosphate + GTP + H(+) = GDP-alpha-D-mannose + diphosphate. It functions in the pathway nucleotide-sugar biosynthesis; GDP-alpha-D-mannose biosynthesis; GDP-alpha-D-mannose from alpha-D-mannose 1-phosphate (GTP route): step 1/1. Functionally, involved in cell wall synthesis where it is required for glycosylation. Involved in cell cycle progression through cell-size checkpoint. This chain is Mannose-1-phosphate guanyltransferase (PSA1), found in Saccharomyces cerevisiae (strain ATCC 204508 / S288c) (Baker's yeast).